The chain runs to 599 residues: Peptidyl-Asp metalloendopeptidase (599 aa).

The N-terminal stretch at M1–A20 is a signal peptide. Residue H164 coordinates Zn(2+). E165 is an active-site residue. Residues H168 and H174 each contribute to the Zn(2+) site. Positions P265–D285 are disordered. Residues Y458–G583 form the CBM-cenC domain.

It belongs to the peptidase M72 family. As to quaternary structure, interacts with BamI, the product of its coregulated adjacent gene, which inhibits its protease activity. Zn(2+) serves as cofactor. In terms of processing, made as a membrane-associated pre-pro-protein, which is exported to the periplasm with removal of the signal peptide, leading to a protein with a molecular mass of 65 kDa, that likely contains the metzincin domain plus tandem carbohydrate-binding domains. Undergoes processing during export to the extracellular milieu, probably by autocatalysis, yielding a (mature length) 25 kDa protein that most likely corresponds to the metzincin domain only.

The protein resides in the secreted. The catalysed reaction is Cleavage of Xaa-|-Asp, Xaa-|-Glu and Xaa-|-cysteic acid bonds.. Its activity is regulated as follows. Is inhibited by BamI, the product of its coregulated adjacent gene. Metalloprotease with endopeptidase activity. Specifically cleaves on the N-terminal side of aspartyl, glutamyl and cysteic acid residues. Mep72 appears to be a secreted biofilm-specific regulator that affects the processing of a very specific subset of virulence factors exported by the type III secretion machinery as well as flagellar proteins. Binds directly to ExoS and PcrV and affects the processing of these proteins in the biofilm secretome, but contrary to expectation, Mep72 seems to protect these targets against proteolytic processing/degradation. This is Peptidyl-Asp metalloendopeptidase from Pseudomonas aeruginosa (strain ATCC 15692 / DSM 22644 / CIP 104116 / JCM 14847 / LMG 12228 / 1C / PRS 101 / PAO1).